We begin with the raw amino-acid sequence, 247 residues long: Peroxisomal membrane protein 11A (247 aa).

The Cytoplasmic portion of the chain corresponds to 1–83 (MDAFTRFTNQ…SIHATDLVPR (83 aa)). Residues 84–105 (LCLTLANLNRVIYFICDTILWV) traverse the membrane as a helical segment. Over 106-219 (RSVGLTSGIN…DQLGIYKSNP (114 aa)) the chain is Lumenal. A helical transmembrane segment spans residues 220–239 (GIIGLGGLVSSIAGMITVAY). Residues 220 to 239 (GIIGLGGLVSSIAGMITVAY) are required for homodimerization, interaction with PEX11G, and peroxisomal localization. The Cytoplasmic portion of the chain corresponds to 240–247 (PQMKLKTR).

Belongs to the peroxin-11 family. Homodimer. Heterodimer with PEX11G. Probably interacts with COPB2 and COPA. Interacts with PEX19. Interacts with FIS1. Post-translationally, seems not to be N-glycosylated.

The protein resides in the peroxisome membrane. In terms of biological role, may be involved in peroxisomal proliferation and may regulate peroxisomes division. May mediate binding of coatomer proteins to the peroxisomal membrane. Promotes membrane protrusion and elongation on the peroxisomal surface. The sequence is that of Peroxisomal membrane protein 11A (PEX11A) from Homo sapiens (Human).